The chain runs to 463 residues: Exodeoxyribonuclease 7 large subunit (463 aa).

The protein belongs to the XseA family. As to quaternary structure, heterooligomer composed of large and small subunits.

It localises to the cytoplasm. It carries out the reaction Exonucleolytic cleavage in either 5'- to 3'- or 3'- to 5'-direction to yield nucleoside 5'-phosphates.. Functionally, bidirectionally degrades single-stranded DNA into large acid-insoluble oligonucleotides, which are then degraded further into small acid-soluble oligonucleotides. The protein is Exodeoxyribonuclease 7 large subunit of Pseudomonas syringae pv. syringae (strain B728a).